The sequence spans 644 residues: 3D-(3,5/4)-trihydroxycyclohexane-1,2-dione hydrolase 2 (644 aa).

A thiamine diphosphate-binding site is contributed by glutamate 65. The interval 442–522 (SLPGDLQRMW…INVLLFDNSG (81 aa)) is thiamine pyrophosphate binding. Residues aspartate 493 and asparagine 520 each coordinate Mg(2+).

This sequence belongs to the TPP enzyme family. The cofactor is Mg(2+). Thiamine diphosphate serves as cofactor.

It catalyses the reaction 3D-3,5/4-trihydroxycyclohexane-1,2-dione + H2O = 5-deoxy-D-glucuronate + H(+). It functions in the pathway polyol metabolism; myo-inositol degradation into acetyl-CoA; acetyl-CoA from myo-inositol: step 3/7. In terms of biological role, involved in the cleavage of the C1-C2 bond of 3D-(3,5/4)-trihydroxycyclohexane-1,2-dione (THcHDO) to yield 5-deoxy-glucuronate (5DG). The polypeptide is 3D-(3,5/4)-trihydroxycyclohexane-1,2-dione hydrolase 2 (Bacillus cereus (strain ZK / E33L)).